The chain runs to 126 residues: Hydrogenase maturation factor HypA (126 aa).

Histidine 2 lines the Ni(2+) pocket. Residues cysteine 78, cysteine 81, cysteine 97, and cysteine 100 each contribute to the Zn(2+) site.

The protein belongs to the HypA/HybF family.

In terms of biological role, involved in the maturation of [NiFe] hydrogenases. Required for nickel insertion into the metal center of the hydrogenase. This chain is Hydrogenase maturation factor HypA, found in Methanococcus maripaludis (strain C6 / ATCC BAA-1332).